The following is a 399-amino-acid chain: UDP-N-acetylglucosamine--N-acetylmuramyl-(pentapeptide) pyrophosphoryl-undecaprenol N-acetylglucosamine transferase (399 aa).

A disordered region spans residues 1–31 (MTSRFGHSQHPRRGRSARARAGRREGVQSNF). Over residues 7–21 (HSQHPRRGRSARARA) the composition is skewed to basic residues. UDP-N-acetyl-alpha-D-glucosamine is bound by residues 58–60 (TGG), Asn170, Arg206, Ser234, Ile288, and Gln333.

Belongs to the glycosyltransferase 28 family. MurG subfamily.

It is found in the cell inner membrane. It carries out the reaction di-trans,octa-cis-undecaprenyl diphospho-N-acetyl-alpha-D-muramoyl-L-alanyl-D-glutamyl-meso-2,6-diaminopimeloyl-D-alanyl-D-alanine + UDP-N-acetyl-alpha-D-glucosamine = di-trans,octa-cis-undecaprenyl diphospho-[N-acetyl-alpha-D-glucosaminyl-(1-&gt;4)]-N-acetyl-alpha-D-muramoyl-L-alanyl-D-glutamyl-meso-2,6-diaminopimeloyl-D-alanyl-D-alanine + UDP + H(+). It functions in the pathway cell wall biogenesis; peptidoglycan biosynthesis. Functionally, cell wall formation. Catalyzes the transfer of a GlcNAc subunit on undecaprenyl-pyrophosphoryl-MurNAc-pentapeptide (lipid intermediate I) to form undecaprenyl-pyrophosphoryl-MurNAc-(pentapeptide)GlcNAc (lipid intermediate II). This is UDP-N-acetylglucosamine--N-acetylmuramyl-(pentapeptide) pyrophosphoryl-undecaprenol N-acetylglucosamine transferase from Acidovorax sp. (strain JS42).